We begin with the raw amino-acid sequence, 501 residues long: Na(+)/H(+) antiporter NhaB (501 aa).

11 consecutive transmembrane segments (helical) span residues 24 to 44, 46 to 66, 90 to 110, 145 to 165, 206 to 226, 239 to 259, 302 to 319, 351 to 371, 395 to 415, 450 to 470, and 478 to 498; these read VILLFLVINPIVMYLLGPGVA, WLLIGEFIFTLAMALKCYPLL, VLTNFPVILLLMFMVAGIYFM, FLDALTVTAVIISVAVGFFSV, LLMHGAIGTALGGVATMVGEP, FAGFFLHMAPVSIPVLFAGLA, ALWIQAVAAVILVFGLAF, FQESLPFTSLLVVFFAVVAVI, MFFIANGLLSMISDNVFVATV, VATPNGQAAFLFLLTSAIAPL, and MVIMALPYTIVMGGVGLYMVT.

It belongs to the NhaB Na(+)/H(+) (TC 2.A.34) antiporter family.

Its subcellular location is the cell inner membrane. It carries out the reaction 2 Na(+)(in) + 3 H(+)(out) = 2 Na(+)(out) + 3 H(+)(in). Functionally, na(+)/H(+) antiporter that extrudes sodium in exchange for external protons. This chain is Na(+)/H(+) antiporter NhaB, found in Marinobacter nauticus (strain ATCC 700491 / DSM 11845 / VT8) (Marinobacter aquaeolei).